The following is a 249-amino-acid chain: MNEAAKTLDGWYVLHDFRKIDWNSWKTVSASEREQMLNEFEALVSKWEGTEKAGKGSHALYSIVGQKADIMIMLLRPTMEELNEIENAFNKSGLAAYMIPTYSYVSVVELSNYLAGDSDEDPYENPYVRSRLYPELPRWKHVCFYPMDKRREGNDNWYMLPMEERKNLMRSHGMIGRGYAGVVKQIISGSVGFDDWEWGVTLFSDDVLQFKKLVYEMRFDEVSARYGEFGSFYVGNILEKERIPAYFHI.

Fe-coproporphyrin III contacts are provided by residues Arg131, 145-149, His172, Gln185, and Ser223; that span reads YPMDK. Tyr145 is a catalytic residue.

This sequence belongs to the ChdC family. Type 1 subfamily. The cofactor is Fe-coproporphyrin III.

The catalysed reaction is Fe-coproporphyrin III + 2 H2O2 + 2 H(+) = heme b + 2 CO2 + 4 H2O. It carries out the reaction Fe-coproporphyrin III + H2O2 + H(+) = harderoheme III + CO2 + 2 H2O. It catalyses the reaction harderoheme III + H2O2 + H(+) = heme b + CO2 + 2 H2O. Its pathway is porphyrin-containing compound metabolism; protoheme biosynthesis. Its function is as follows. Involved in coproporphyrin-dependent heme b biosynthesis. Catalyzes the decarboxylation of Fe-coproporphyrin III (coproheme) to heme b (protoheme IX), the last step of the pathway. The reaction occurs in a stepwise manner with a three-propionate intermediate. In Shouchella clausii (strain KSM-K16) (Alkalihalobacillus clausii), this protein is Coproheme decarboxylase.